Here is a 622-residue protein sequence, read N- to C-terminus: DNA mismatch repair protein MutL (622 aa).

It belongs to the DNA mismatch repair MutL/HexB family.

Functionally, this protein is involved in the repair of mismatches in DNA. It is required for dam-dependent methyl-directed DNA mismatch repair. May act as a 'molecular matchmaker', a protein that promotes the formation of a stable complex between two or more DNA-binding proteins in an ATP-dependent manner without itself being part of a final effector complex. The protein is DNA mismatch repair protein MutL of Phenylobacterium zucineum (strain HLK1).